Consider the following 504-residue polypeptide: L-carnitine/gamma-butyrobetaine antiporter (504 aa).

12 helical membrane passes run 10-30, 51-71, 92-112, 143-163, 195-215, 231-251, 263-283, 316-336, 347-367, 403-423, 446-466, and 475-495; these read IEPKVFFPPLIIVGILCWLTV, WGWAFEWYMVVMLFGWFWLVF, IFMMFASCTSAAVLFWGSIEI, GPLPWATYSFLSVAFAYFFFV, FYLVALIFAMGTSLGLATPLV, LDAIIITCWIILNAICVACGL, SYLSFLMLGWVFIVSGASFIM, WTVFYWAWWVIYAIQMSIFLA, LCFGMVMGLTASTWILWTVLG, LSTATMWGFFILCFIATVTLI, LLVRIGWSILVGIIGIVLLAL, and AIIAGGCPLFFVNIMVTLSFI.

Belongs to the BCCT transporter (TC 2.A.15) family. CaiT subfamily. As to quaternary structure, homotrimer.

The protein localises to the cell inner membrane. The catalysed reaction is 4-(trimethylamino)butanoate(in) + (R)-carnitine(out) = 4-(trimethylamino)butanoate(out) + (R)-carnitine(in). It participates in amine and polyamine metabolism; carnitine metabolism. Catalyzes the exchange of L-carnitine for gamma-butyrobetaine. This chain is L-carnitine/gamma-butyrobetaine antiporter, found in Escherichia fergusonii (strain ATCC 35469 / DSM 13698 / CCUG 18766 / IAM 14443 / JCM 21226 / LMG 7866 / NBRC 102419 / NCTC 12128 / CDC 0568-73).